A 298-amino-acid chain; its full sequence is uncharacterized protein (298 aa).

The next 10 helical transmembrane spans lie at 5–25 (ILFG…MSAF), 36–56 (MENV…IYPF), 76–96 (VVVG…ISLA), 97–117 (TATA…PLLL), 124–144 (SALI…DPSV), 147–167 (VGLV…LAYI), 181–201 (VILA…FIDI), 216–236 (ILWI…LTYA), 244–264 (IIAP…LYLG), and 272–292 (SSLG…PALL). Residues 17–141 (LCFGIMSAFV…GLVGVVLISD (125 aa)) form the EamA 1 domain. In terms of domain architecture, EamA 2 spans 183–288 (LAFAFGMSLL…ILCSGLLIAL (106 aa)).

Belongs to the EamA transporter family.

The protein resides in the cell membrane. This is an uncharacterized protein from Helicobacter pylori (strain J99 / ATCC 700824) (Campylobacter pylori J99).